The primary structure comprises 79 residues: Putative membrane protein insertion efficiency factor (79 aa).

This sequence belongs to the UPF0161 family.

Its subcellular location is the cell inner membrane. Functionally, could be involved in insertion of integral membrane proteins into the membrane. This is Putative membrane protein insertion efficiency factor from Bacteroides thetaiotaomicron (strain ATCC 29148 / DSM 2079 / JCM 5827 / CCUG 10774 / NCTC 10582 / VPI-5482 / E50).